The chain runs to 293 residues: 4-hydroxy-tetrahydrodipicolinate synthase (293 aa).

Residue T47 coordinates pyruvate. Catalysis depends on Y135, which acts as the Proton donor/acceptor. Catalysis depends on K163, which acts as the Schiff-base intermediate with substrate. Position 204 (I204) interacts with pyruvate.

Belongs to the DapA family. In terms of assembly, homotetramer; dimer of dimers.

It localises to the cytoplasm. It carries out the reaction L-aspartate 4-semialdehyde + pyruvate = (2S,4S)-4-hydroxy-2,3,4,5-tetrahydrodipicolinate + H2O + H(+). It functions in the pathway amino-acid biosynthesis; L-lysine biosynthesis via DAP pathway; (S)-tetrahydrodipicolinate from L-aspartate: step 3/4. Functionally, catalyzes the condensation of (S)-aspartate-beta-semialdehyde [(S)-ASA] and pyruvate to 4-hydroxy-tetrahydrodipicolinate (HTPA). The protein is 4-hydroxy-tetrahydrodipicolinate synthase of Brachyspira hyodysenteriae (strain ATCC 49526 / WA1).